Consider the following 136-residue polypeptide: UPF0216 protein PYRAB16100 (136 aa).

The protein belongs to the UPF0216 family.

This chain is UPF0216 protein PYRAB16100, found in Pyrococcus abyssi (strain GE5 / Orsay).